Consider the following 546-residue polypeptide: Chaperonin GroEL (546 aa).

Residues 30–33 (TLGP), lysine 51, 87–91 (DGTTT), glycine 415, 479–481 (NAA), and aspartate 495 contribute to the ATP site. The interval 527-546 (EEKPDVSASSGGMGGMGGMM) is disordered. Over residues 537-546 (GGMGGMGGMM) the composition is skewed to gly residues.

This sequence belongs to the chaperonin (HSP60) family. In terms of assembly, forms a cylinder of 14 subunits composed of two heptameric rings stacked back-to-back. Interacts with the co-chaperonin GroES.

Its subcellular location is the cytoplasm. It catalyses the reaction ATP + H2O + a folded polypeptide = ADP + phosphate + an unfolded polypeptide.. In terms of biological role, together with its co-chaperonin GroES, plays an essential role in assisting protein folding. The GroEL-GroES system forms a nano-cage that allows encapsulation of the non-native substrate proteins and provides a physical environment optimized to promote and accelerate protein folding. In Baumannia cicadellinicola subsp. Homalodisca coagulata, this protein is Chaperonin GroEL.